The primary structure comprises 661 residues: UvrABC system protein B (661 aa).

Residues 28-414 form the Helicase ATP-binding domain; it reads DGVNERKRHQ…HTDEMVEQII (387 aa). 41-48 provides a ligand contact to ATP; it reads GATGTGKT. A Beta-hairpin motif is present at residues 94–117; that stretch reads YYDYYQPEAYVPSTDTFIEKDASI. The region spanning 432–598 is the Helicase C-terminal domain; that stretch reads QIDDLLSEIQ…TINKKIHDVI (167 aa). Positions 603-624 are disordered; that stretch reads ESDETNQQQQTELPKKMTKKER. Residues 625–660 enclose the UVR domain; that stretch reads QKTIENIEKEMKKAAKDLDFEKATELRDMLFELKAE.

This sequence belongs to the UvrB family. Forms a heterotetramer with UvrA during the search for lesions. Interacts with UvrC in an incision complex.

It is found in the cytoplasm. Its function is as follows. The UvrABC repair system catalyzes the recognition and processing of DNA lesions. A damage recognition complex composed of 2 UvrA and 2 UvrB subunits scans DNA for abnormalities. Upon binding of the UvrA(2)B(2) complex to a putative damaged site, the DNA wraps around one UvrB monomer. DNA wrap is dependent on ATP binding by UvrB and probably causes local melting of the DNA helix, facilitating insertion of UvrB beta-hairpin between the DNA strands. Then UvrB probes one DNA strand for the presence of a lesion. If a lesion is found the UvrA subunits dissociate and the UvrB-DNA preincision complex is formed. This complex is subsequently bound by UvrC and the second UvrB is released. If no lesion is found, the DNA wraps around the other UvrB subunit that will check the other stand for damage. In Staphylococcus epidermidis (strain ATCC 12228 / FDA PCI 1200), this protein is UvrABC system protein B.